The chain runs to 201 residues: Holliday junction branch migration complex subunit RuvA (201 aa).

The interval 1 to 64 (MFAYIKGVLA…EFSHTLYGFL (64 aa)) is domain I. Residues 65–143 (SYQERDIFEI…AIGHLDTSDH (79 aa)) form a domain II region. The tract at residues 144–153 (IEPLTQDPKS) is flexible linker. Residues 153–201 (SKSVQDAMLALINLGYNQTTAQKAIKQGMKELPEEIDLAQLITVALKHV) are domain III.

Belongs to the RuvA family. In terms of assembly, homotetramer. Forms an RuvA(8)-RuvB(12)-Holliday junction (HJ) complex. HJ DNA is sandwiched between 2 RuvA tetramers; dsDNA enters through RuvA and exits via RuvB. An RuvB hexamer assembles on each DNA strand where it exits the tetramer. Each RuvB hexamer is contacted by two RuvA subunits (via domain III) on 2 adjacent RuvB subunits; this complex drives branch migration. In the full resolvosome a probable DNA-RuvA(4)-RuvB(12)-RuvC(2) complex forms which resolves the HJ.

It localises to the cytoplasm. In terms of biological role, the RuvA-RuvB-RuvC complex processes Holliday junction (HJ) DNA during genetic recombination and DNA repair, while the RuvA-RuvB complex plays an important role in the rescue of blocked DNA replication forks via replication fork reversal (RFR). RuvA specifically binds to HJ cruciform DNA, conferring on it an open structure. The RuvB hexamer acts as an ATP-dependent pump, pulling dsDNA into and through the RuvAB complex. HJ branch migration allows RuvC to scan DNA until it finds its consensus sequence, where it cleaves and resolves the cruciform DNA. This is Holliday junction branch migration complex subunit RuvA from Protochlamydia amoebophila (strain UWE25).